A 1894-amino-acid chain; its full sequence is 1,3-beta-glucan synthase component bgs2 (1894 aa).

Disordered stretches follow at residues 1 to 53 (MSWH…DSNK) and 282 to 310 (GPKI…PETS). The span at 32–51 (EFNNPGEESTYPQANSWNDS) shows a compositional bias: polar residues. Over residues 286 to 296 (KQAKKKQKRKS) the composition is skewed to basic residues. Helical transmembrane passes span 530 to 550 (VSLG…FEWI), 566 to 586 (FLIL…VFGF), 600 to 620 (VAIV…LVPL), 655 to 675 (VSWG…YFFL), 710 to 730 (ILLG…TYLW), 731 to 751 (YILV…ISIW), 1338 to 1358 (IFIM…GGMY), 1394 to 1414 (CIIS…VQEL), 1476 to 1498 (LLFS…MLLF), 1503 to 1525 (VWIP…PFIF), 1598 to 1618 (FTEI…YFFI), 1637 to 1657 (ILIL…TFAG), 1673 to 1693 (FGAV…IIVF), 1697 to 1717 (WYLE…IIAI), 1778 to 1798 (DFFL…IPFI), and 1837 to 1857 (TMFF…LVVA).

The protein belongs to the glycosyltransferase 48 family. As to quaternary structure, component of the 1,3-beta-glucan synthase (GS) complex, composed of at least the alternate catalytic subunits bgs1, bgs2, bgs3, and bgs4, and a regulatory subunit chr4.

It is found in the prospore membrane. The catalysed reaction is [(1-&gt;3)-beta-D-glucosyl](n) + UDP-alpha-D-glucose = [(1-&gt;3)-beta-D-glucosyl](n+1) + UDP + H(+). In terms of biological role, alternate catalytic subunit of the 1,3-beta-glucan synthase (GS) complex. Synthesizes 1,3-beta-glucan, a major structural component of the yeast cell wall. Has a role in ascospore development where it is required for the assembly of a functional spore wall. This is 1,3-beta-glucan synthase component bgs2 from Schizosaccharomyces pombe (strain 972 / ATCC 24843) (Fission yeast).